A 1254-amino-acid polypeptide reads, in one-letter code: AF4/FMR2 family member 3 (1254 aa).

Basic and acidic residues predominate over residues 45–62 (YEPDRNALRRKERERRSQ). Disordered stretches follow at residues 45–90 (YEPD…GDEL), 139–190 (AESR…AAQQ), 261–324 (RPMD…GENN), 350–534 (EPSK…EGQD), and 552–752 (KTTC…SVGS). Polar residues-rich tracts occupy residues 67–76 (DSGSFNSGYS) and 143–158 (AQPQPSTVCSTASSTP). A compositionally biased stretch (polar residues) spans 359 to 369 (KDSQLVSSGHS). The span at 406-418 (QQAAQRTALRALA) shows a compositional bias: low complexity. The span at 421–433 (SVVQQTNCRGSAP) shows a compositional bias: polar residues. Residues 441–472 (SSSSGGSSSSSDSESTSGSDSETESSSSSSES) show a composition bias toward low complexity. Over residues 552–561 (KTTCKEEQRP) the composition is skewed to basic and acidic residues. Low complexity predominate over residues 577 to 605 (SPPAAVAVTAAALPPAVPSAPTESAPAPT). The segment covering 615-633 (RRTERTSAGDGANCHRPEE) has biased composition (basic and acidic residues). 2 stretches are compositionally biased toward low complexity: residues 694–704 (TESSSSSSSSD) and 732–749 (AASSNNNSNSNSSTSRAS). S782 carries the phosphoserine modification. Residues 813 to 883 (PGVLSAPSAK…ASTNNTLSGN (71 aa)) are disordered. The span at 857-869 (REIKKVQGRKESA) shows a compositional bias: basic and acidic residues. A compositionally biased stretch (polar residues) spans 873-883 (AASTNNTLSGN). S908 carries the phosphoserine modification. 2 disordered regions span residues 919 to 991 (ASED…HRDC) and 1128 to 1171 (AAQA…SGLS). Composition is skewed to polar residues over residues 922-941 (DLTSSSRPHGNGLLTSASSN) and 960-985 (ASHNSSENGTLHSKSRPQTEPWSPGS). Low complexity-rich tracts occupy residues 1132-1146 (PSPWGSSGKSTGSPS) and 1154-1171 (PASSVGSQGSLSSSSGLS).

It belongs to the AF4 family. As to expression, highest levels found in lymphoid tissues, lower levels in brain and lung.

It localises to the nucleus. Functionally, putative transcription activator that may function in lymphoid development and oncogenesis. This chain is AF4/FMR2 family member 3 (Aff3), found in Mus musculus (Mouse).